Here is a 71-residue protein sequence, read N- to C-terminus: Small ribosomal subunit protein bS21 (71 aa).

The disordered stretch occupies residues 37–71 (HYEKPTAERKRKKAAAVKRHMKKLSRDNARRVKLY). The segment covering 45–59 (RKRKKAAAVKRHMKK) has biased composition (basic residues). A compositionally biased stretch (basic and acidic residues) spans 60–71 (LSRDNARRVKLY).

It belongs to the bacterial ribosomal protein bS21 family.

The polypeptide is Small ribosomal subunit protein bS21 (Pseudoalteromonas translucida (strain TAC 125)).